Here is a 183-residue protein sequence, read N- to C-terminus: Peptidoglycan recognition protein 1 (183 aa).

The first 17 residues, 1–17 (MLFAWAPFPALLGLADS), serve as a signal peptide directing secretion. 3 disulfides stabilise this stretch: Cys-18–Cys-142, Cys-34–Cys-79, and Cys-55–Cys-61. Residues 40-168 (KPVRYVVISH…RDVQSTLSPG (129 aa)) enclose the N-acetylmuramoyl-L-alanine amidase domain.

Belongs to the N-acetylmuramoyl-L-alanine amidase 2 family. As to expression, expressed in all regions of the brain.

Its subcellular location is the secreted. It is found in the cytoplasmic granule. In terms of biological role, innate immunity protein that plays several important functions in antimicrobial and antitumor defense systems. Acts as a pattern receptor that binds to murein peptidoglycans (PGN) of Gram-positive bacteria and thus provides bactericidal activity. Forms an equimolar complex with heat shock protein HSPA1A and induces programmed cell death through apoptosis and necroptosis in tumor cell lines by activating the TNFR1 receptor on the target cell membrane. In addition, acts in complex with the Ca(2+)-binding protein S100A4 as a chemoattractant able to induce lymphocyte movement. Mechanistically, this complex acts as a ligand of the chemotactic receptors CCR5 and CXCR3 which are present on the cells of the immune system. Promotes also the activation of lymphocytes that become able to kill virus-infected cells as well as tumor cells by modulating the spectrum of their target-cell specificity. Induction of cytotoxicity on monocyte surface requires interaction with TREM1 receptor. The chain is Peptidoglycan recognition protein 1 (Pglyrp1) from Rattus norvegicus (Rat).